The following is a 497-amino-acid chain: Succinate-semialdehyde dehydrogenase [NADP(+)] (497 aa).

The Proton acceptor role is filled by Glu264. Cys298 functions as the Nucleophile in the catalytic mechanism.

This sequence belongs to the aldehyde dehydrogenase family. In terms of assembly, homotetramer.

It localises to the cytoplasm. The catalysed reaction is succinate semialdehyde + NAD(+) + H2O = succinate + NADH + 2 H(+). It catalyses the reaction succinate semialdehyde + NADP(+) + H2O = succinate + NADPH + 2 H(+). It participates in amino-acid degradation; 4-aminobutanoate degradation. Inhibited by AMP, ADP anf ATP. Its function is as follows. Catalyzes the oxidation of succinate semialdehyde to succinate. Can utilize both NAD(+) or NADP(+) as a coenzyme, but has a 2.5-fold lower activity with NADP(+) than with NAD(+). Functions in a gamma-aminobutyrate (GABA) degradation pathway that allows growth utilizing GABA as a nitrogen source. Functions in the GABA shunt, which allows to bypass 2 reactions in the TCA cycle by removing alpha-ketoglutarate from the cycle and feeding succinate and NADH back into the cycle. This chain is Succinate-semialdehyde dehydrogenase [NADP(+)], found in Saccharomyces cerevisiae (strain ATCC 204508 / S288c) (Baker's yeast).